We begin with the raw amino-acid sequence, 137 residues long: Nucleoside diphosphate kinase (137 aa).

ATP is bound by residues K10, F58, R86, T92, R103, and N113. H116 serves as the catalytic Pros-phosphohistidine intermediate.

It belongs to the NDK family. Homotetramer. The cofactor is Mg(2+).

The protein resides in the cytoplasm. It carries out the reaction a 2'-deoxyribonucleoside 5'-diphosphate + ATP = a 2'-deoxyribonucleoside 5'-triphosphate + ADP. It catalyses the reaction a ribonucleoside 5'-diphosphate + ATP = a ribonucleoside 5'-triphosphate + ADP. Major role in the synthesis of nucleoside triphosphates other than ATP. The ATP gamma phosphate is transferred to the NDP beta phosphate via a ping-pong mechanism, using a phosphorylated active-site intermediate. This is Nucleoside diphosphate kinase from Helicobacter pylori (strain P12).